The primary structure comprises 627 residues: Mitochondrial distribution and morphology protein 34 (627 aa).

The 195-residue stretch at 1–195 (MAFNFNWSPL…LPAIIHRLSL (195 aa)) folds into the SMP-LTD domain. Disordered stretches follow at residues 209–230 (SAQV…NPPQ), 332–470 (ASLA…RTSP), 486–557 (LQRQ…SRPS), and 586–627 (RIQD…AYRH). Composition is skewed to low complexity over residues 215 to 225 (PSLDGPGLDPL) and 332 to 341 (ASLASSSHSR). Over residues 360–372 (RHSKAHARKRKKR) the composition is skewed to basic residues. A compositionally biased stretch (basic and acidic residues) spans 373-384 (VVDLRRRPKSAD). Positions 390–412 (SGESAYTETSTTTSAVSVFSGST) are enriched in low complexity. A compositionally biased stretch (basic and acidic residues) spans 436 to 451 (TLRDRIAARDDAERNS). Positions 528–557 (PNASNNYTSSSSPSARDPQQQQPQQLSRPS) are enriched in low complexity.

It belongs to the MDM34 family. In terms of assembly, component of the ER-mitochondria encounter structure (ERMES) or MDM complex, composed of MMM1, MDM10, MDM12 and MDM34.

Its subcellular location is the mitochondrion outer membrane. In terms of biological role, component of the ERMES/MDM complex, which serves as a molecular tether to connect the endoplasmic reticulum (ER) and mitochondria. Components of this complex are involved in the control of mitochondrial shape and protein biogenesis, and function in nonvesicular lipid trafficking between the ER and mitochondria. MDM34 is required for the interaction of the ER-resident membrane protein MMM1 and the outer mitochondrial membrane-resident beta-barrel protein MDM10. The chain is Mitochondrial distribution and morphology protein 34 from Blastomyces gilchristii (strain SLH14081) (Blastomyces dermatitidis).